Reading from the N-terminus, the 446-residue chain is 4-aminobutyrate aminotransferase (446 aa).

Residue Lys291 is modified to N6-(pyridoxal phosphate)lysine.

This sequence belongs to the class-III pyridoxal-phosphate-dependent aminotransferase family. It depends on pyridoxal 5'-phosphate as a cofactor.

It catalyses the reaction 4-aminobutanoate + 2-oxoglutarate = succinate semialdehyde + L-glutamate. It carries out the reaction (S)-3-amino-2-methylpropanoate + 2-oxoglutarate = 2-methyl-3-oxopropanoate + L-glutamate. It functions in the pathway amino-acid degradation; 4-aminobutanoate degradation. The chain is 4-aminobutyrate aminotransferase (gabT) from Mycobacterium leprae (strain TN).